The chain runs to 432 residues: ATP-dependent RNA helicase RhlB (432 aa).

Positions 9-37 match the Q motif motif; the sequence is QNFADLGLQPQVIDGLNAKGFIKCTPIQA. Residues 40 to 219 form the Helicase ATP-binding domain; that stretch reads LPVLLAGQDI…FEHMQEPEHV (180 aa). 53 to 60 serves as a coordination point for ATP; that stretch reads AQTGTGKT. The short motif at 165-168 is the DEAD box element; the sequence is DEAD. The Helicase C-terminal domain occupies 245–390; that stretch reads ALLQTLIEEE…QSDYDASALL (146 aa). A disordered region spans residues 396-432; it reads PLRLQRRPQQNRRNNNGQRQGGNRKHTRPRQPRNTQS. Residues 417–426 are compositionally biased toward basic residues; it reads GNRKHTRPRQ.

This sequence belongs to the DEAD box helicase family. RhlB subfamily. As to quaternary structure, component of the RNA degradosome, which is a multiprotein complex involved in RNA processing and mRNA degradation.

It is found in the cytoplasm. The catalysed reaction is ATP + H2O = ADP + phosphate + H(+). Its function is as follows. DEAD-box RNA helicase involved in RNA degradation. Has RNA-dependent ATPase activity and unwinds double-stranded RNA. The protein is ATP-dependent RNA helicase RhlB of Aliivibrio fischeri (strain ATCC 700601 / ES114) (Vibrio fischeri).